A 390-amino-acid chain; its full sequence is MKIQVLVLVCLHLSEGVERIILKKGKSIRQVMEERGVLETFLRNHPKVDPAAKYLFNNDAVAYEPFTNYLDSYYFGEISIGTPPQNFLILFDTGSSNLWVPSTYCQSQACSNHNRFNPSRSSTYQSSEQTYTLAYGFGSLTVLLGYDTVTVQNIVIHNQLFGMSENEPNYPFYYSYFDGILGMAYSNLAVDNGPTVLQNMMQQGQLTQPIFSFYFSPQPTYEYGGELILGGVDTQFYSGEIVWAPVTREMYWQVAIDEFLIGNQATGLCSQGCQGIVDTGTFPLTVPQQYLDSFVKATGAQQDQSGNFVVNCNSIQSMPTITFVISGSPLPLPPSTYVLNNNGYCTLGIEVTYLPSPNGQPLWILGDVFLREYYTVFDMAANRVGFALSS.

Positions 1-16 are cleaved as a signal peptide; sequence MKIQVLVLVCLHLSEG. The propeptide at 17–59 is activation peptide; that stretch reads VERIILKKGKSIRQVMEERGVLETFLRNHPKVDPAAKYLFNND. The region spanning 74–387 is the Peptidase A1 domain; it reads YFGEISIGTP…DMAANRVGFA (314 aa). Residue D92 is part of the active site. Disulfide bonds link C105–C110 and C269–C273. D278 is an active-site residue. Residues C312 and C345 are joined by a disulfide bond.

This sequence belongs to the peptidase A1 family.

Its subcellular location is the secreted. The catalysed reaction is Degradation of gelatin, little activity on hemoglobin. Specificity on B chain of insulin more restricted than that of pepsin A. Does not cleave 1-Phe-|-Val-2, 4-Gln-|-His-5 or 23-Gly-|-Phe-24.. Functionally, hydrolyzes various peptides including beta-endorphin, insulin B chain, dynorphin A, and neurokinin A, with high specificity for the cleavage of the Phe-Xaa bonds. This Canis lupus familiaris (Dog) protein is Pepsin B (PGB).